Consider the following 485-residue polypeptide: Adenosylhomocysteinase 2 (485 aa).

3 residues coordinate substrate: T64, D139, and E205. 206–208 (TTT) serves as a coordination point for NAD(+). K235 and D239 together coordinate substrate. NAD(+)-binding positions include N240, 269 to 274 (GYGDVG), E292, N327, 348 to 350 (IGH), and N397.

It belongs to the adenosylhomocysteinase family. The cofactor is NAD(+).

The enzyme catalyses S-adenosyl-L-homocysteine + H2O = L-homocysteine + adenosine. It functions in the pathway amino-acid biosynthesis; L-homocysteine biosynthesis; L-homocysteine from S-adenosyl-L-homocysteine: step 1/1. In terms of biological role, adenosylhomocysteine is a competitive inhibitor of S-adenosyl-L-methionine-dependent methyl transferase reactions; therefore adenosylhomocysteinase may play a key role in the control of methylations via regulation of the intracellular concentration of adenosylhomocysteine. The sequence is that of Adenosylhomocysteinase 2 (SAHH2) from Arabidopsis thaliana (Mouse-ear cress).